Here is a 130-residue protein sequence, read N- to C-terminus: Small ribosomal subunit protein uS11 (130 aa).

Belongs to the universal ribosomal protein uS11 family. Part of the 30S ribosomal subunit. Interacts with proteins S7 and S18. Binds to IF-3.

Located on the platform of the 30S subunit, it bridges several disparate RNA helices of the 16S rRNA. Forms part of the Shine-Dalgarno cleft in the 70S ribosome. The protein is Small ribosomal subunit protein uS11 of Thermotoga petrophila (strain ATCC BAA-488 / DSM 13995 / JCM 10881 / RKU-1).